The chain runs to 89 residues: Acylphosphatase (89 aa).

The 87-residue stretch at 3–89 (RFTARVAGLV…QSDLTDFRRK (87 aa)) folds into the Acylphosphatase-like domain. Active-site residues include R18 and N36.

The protein belongs to the acylphosphatase family.

It carries out the reaction an acyl phosphate + H2O = a carboxylate + phosphate + H(+). This chain is Acylphosphatase (acyP), found in Frankia casuarinae (strain DSM 45818 / CECT 9043 / HFP020203 / CcI3).